The sequence spans 198 residues: Ribonuclease 3-like protein 1 (198 aa).

Residues 85–110 are compositionally biased toward basic and acidic residues; sequence KKLAPKPDEEHTTTTKPISKDDESKT. The interval 85 to 115 is disordered; that stretch reads KKLAPKPDEEHTTTTKPISKDDESKTRRGSA. In terms of domain architecture, DRBM spans 114–191; that stretch reads SAKSVLHEMC…AEGALWYLEH (78 aa).

The protein is Ribonuclease 3-like protein 1 (RTL1) of Arabidopsis thaliana (Mouse-ear cress).